Consider the following 325-residue polypeptide: Phenylalanine--tRNA ligase alpha subunit (325 aa).

Glu-251 is a binding site for Mg(2+).

This sequence belongs to the class-II aminoacyl-tRNA synthetase family. Phe-tRNA synthetase alpha subunit type 1 subfamily. In terms of assembly, tetramer of two alpha and two beta subunits. The cofactor is Mg(2+).

The protein localises to the cytoplasm. It carries out the reaction tRNA(Phe) + L-phenylalanine + ATP = L-phenylalanyl-tRNA(Phe) + AMP + diphosphate + H(+). The chain is Phenylalanine--tRNA ligase alpha subunit (pheS) from Thermotoga maritima (strain ATCC 43589 / DSM 3109 / JCM 10099 / NBRC 100826 / MSB8).